The sequence spans 833 residues: Leucine--tRNA ligase (833 aa).

The short motif at 41 to 52 is the 'HIGH' region element; sequence PYPSGAGLHVGH. The short motif at 610–614 is the 'KMSKS' region element; it reads KMSKS. ATP is bound at residue Lys613.

It belongs to the class-I aminoacyl-tRNA synthetase family.

Its subcellular location is the cytoplasm. It carries out the reaction tRNA(Leu) + L-leucine + ATP = L-leucyl-tRNA(Leu) + AMP + diphosphate. The polypeptide is Leucine--tRNA ligase (Streptococcus uberis (strain ATCC BAA-854 / 0140J)).